Consider the following 291-residue polypeptide: Phosphate import ATP-binding protein PstB (291 aa).

Positions Val-44 to Ile-286 constitute an ABC transporter domain. Residue Gly-76–Ser-83 coordinates ATP.

Belongs to the ABC transporter superfamily. Phosphate importer (TC 3.A.1.7) family. In terms of assembly, the complex is composed of two ATP-binding proteins (PstB), two transmembrane proteins (PstC and PstA) and a solute-binding protein (PstS).

The protein localises to the cell inner membrane. The catalysed reaction is phosphate(out) + ATP + H2O = ADP + 2 phosphate(in) + H(+). Functionally, part of the ABC transporter complex PstSACB involved in phosphate import. Responsible for energy coupling to the transport system. This chain is Phosphate import ATP-binding protein PstB, found in Chelativorans sp. (strain BNC1).